Here is a 363-residue protein sequence, read N- to C-terminus: MKIGVFVPIGNNGWLISTHAPQYMPTFELNKAIVQKAEHYHFDFALSMIKLRGFGGKTEFWDHNLESFTLMAGLAAVTSRIQIYATAATLTLPPAIVARMAATIDSISGGRFGVNLVTGWQKPEYEQMGIWPGDDYFSRRYDYLTEYVQVLRDLWGTGKSDFKGDFFTMNDCRVSPQPSVPMKVICAGQSDAGMAFSAQYADFNFCFGKGVNTPTAFAPTAARMKQAAEQTGRDVGSYVLFMVIADETDDAARAKWEHYKAGADEEALSWLTEQSQKDTRSGTDTNVRQMADPTSAVNINMGTLVGSYASVARMLDEVASVPGAEGVLLTFDDFLSGIETFGERIQPLMQCRAHLPVLTQEVA.

FMN contacts are provided by residues 49-50, Asn115, Glu124, 140-141, and Ser190; these read IK and RY.

This sequence belongs to the NtaA/SnaA/DszA monooxygenase family. RutA subfamily.

It carries out the reaction uracil + FMNH2 + NADH + O2 = (Z)-3-ureidoacrylate + FMN + NAD(+) + H2O + H(+). The catalysed reaction is thymine + FMNH2 + NADH + O2 = (Z)-2-methylureidoacrylate + FMN + NAD(+) + H2O + H(+). Functionally, catalyzes the pyrimidine ring opening between N-3 and C-4 by an unusual flavin hydroperoxide-catalyzed mechanism, adding oxygen atoms in the process to yield ureidoacrylate peracid, that immediately reacts with FMN forming ureidoacrylate and FMN-N(5)-oxide. The FMN-N(5)-oxide reacts spontaneously with NADH to produce FMN. Requires the flavin reductase RutF to regenerate FMN in vivo. The polypeptide is Pyrimidine monooxygenase RutA (Escherichia coli O157:H7 (strain EC4115 / EHEC)).